The chain runs to 483 residues: Probable glycosyltransferase 6 (483 aa).

The Cytoplasmic portion of the chain corresponds to 1–40; sequence MAASETAPFGVSAASKGGGGVAGARAQHGQLAVAGRVHDA. Residues 41–61 form a helical; Signal-anchor for type II membrane protein membrane-spanning segment; sequence LVFAAGAVAAVLVLLATASFL. The Lumenal segment spans residues 62–483; that stretch reads SPMPVTNLVA…PLPFDYPAAR (422 aa). Residue Asn-144 is glycosylated (N-linked (GlcNAc...) asparagine).

It belongs to the glycosyltransferase 34 family.

The protein resides in the golgi apparatus membrane. In terms of biological role, probable glycosyltransferase that may be involved in the biosynthesis of xyloglucan. The protein is Probable glycosyltransferase 6 of Oryza sativa subsp. indica (Rice).